A 413-amino-acid polypeptide reads, in one-letter code: Putative competence-damage inducible protein (413 aa).

The protein belongs to the CinA family.

This Pediococcus pentosaceus (strain ATCC 25745 / CCUG 21536 / LMG 10740 / 183-1w) protein is Putative competence-damage inducible protein.